The following is a 594-amino-acid chain: MNELIKHKLELLPDSPGCYLHKDKAGTIIYVGKAKNLRNRVRSYFRGSHDTKTELLVSEIADFEFIVTGSNTEALLLEINLIQENMPKYNIKLKDDKSYPFIKITNEPFPRLLITRQIKKNDGLYFGPYPDAYTATEVKKLLDRIFPFKKCKNPVNKVCFYYHLGQCQAHTICHTDKAYWDSLVADVKQFLNGKDDKIIDDLRSKMLEASHNQEFERAAEYRDLISGIATMRTKQRVMSKDLQDRDIFGYFVDKGWMCVQVFFVRQGKLIQRDVNMFPYYNEAEEDFLTYVGQFYSDQRHLIPKEVFIPETIDETLVAAIVPARIVKPQRGEKKQLVALATKNARVSLQQKFDLLEKDLRKTSGAIEHLGQLLGIEKPVRIEAFDNSNIQGTSPVAAMVVFVDGKPSKKDYRKFKIKTVIGPDDYASMREVIYRRYSRVKHEGLQAPDLIIVDGGQGQVKAARDVIEHQLGLSIPVAGLQKNDKHQTHELLFGNPLAVVELPRNSEEFFLLHRIQDEVHRFAITFHRQVRSKNAFSSKLDHIAGLGPKRKQLLLKRFKSMAALEQASLEEIQQLGIPKTVAEALIDHLTSKSDT.

The region spanning 14–91 (DSPGCYLHKD…IQENMPKYNI (78 aa)) is the GIY-YIG domain. The region spanning 196-231 (DKIIDDLRSKMLEASHNQEFERAAEYRDLISGIATM) is the UVR domain.

This sequence belongs to the UvrC family. Interacts with UvrB in an incision complex.

Its subcellular location is the cytoplasm. The UvrABC repair system catalyzes the recognition and processing of DNA lesions. UvrC both incises the 5' and 3' sides of the lesion. The N-terminal half is responsible for the 3' incision and the C-terminal half is responsible for the 5' incision. The chain is UvrABC system protein C from Streptococcus equi subsp. zooepidemicus (strain H70).